We begin with the raw amino-acid sequence, 197 residues long: Large ribosomal subunit protein bL25 (197 aa).

It belongs to the bacterial ribosomal protein bL25 family. CTC subfamily. Part of the 50S ribosomal subunit; part of the 5S rRNA/L5/L18/L25 subcomplex. Contacts the 5S rRNA. Binds to the 5S rRNA independently of L5 and L18.

In terms of biological role, this is one of the proteins that binds to the 5S RNA in the ribosome where it forms part of the central protuberance. This chain is Large ribosomal subunit protein bL25, found in Citrifermentans bemidjiense (strain ATCC BAA-1014 / DSM 16622 / JCM 12645 / Bem) (Geobacter bemidjiensis).